Consider the following 417-residue polypeptide: NADH-quinone oxidoreductase subunit D (417 aa).

This sequence belongs to the complex I 49 kDa subunit family. As to quaternary structure, NDH-1 is composed of 14 different subunits. Subunits NuoB, C, D, E, F, and G constitute the peripheral sector of the complex.

The protein localises to the cell inner membrane. The enzyme catalyses a quinone + NADH + 5 H(+)(in) = a quinol + NAD(+) + 4 H(+)(out). Functionally, NDH-1 shuttles electrons from NADH, via FMN and iron-sulfur (Fe-S) centers, to quinones in the respiratory chain. The immediate electron acceptor for the enzyme in this species is believed to be ubiquinone. Couples the redox reaction to proton translocation (for every two electrons transferred, four hydrogen ions are translocated across the cytoplasmic membrane), and thus conserves the redox energy in a proton gradient. The protein is NADH-quinone oxidoreductase subunit D of Alkalilimnicola ehrlichii (strain ATCC BAA-1101 / DSM 17681 / MLHE-1).